The chain runs to 686 residues: Protein arginine N-methyltransferase 7 (686 aa).

SAM-dependent MTase PRMT-type domains follow at residues 5–352 (SDDY…FSWW) and 357–686 (DLSL…FKFD).

This sequence belongs to the class I-like SAM-binding methyltransferase superfamily. Protein arginine N-methyltransferase family. PRMT7 subfamily.

Functionally, essential arginine methyltransferase that can both catalyze the formation of omega-N monomethylarginine (MMA) and symmetrical dimethylarginine (sDMA). Specifically mediates the symmetrical dimethylation of arginine residues in the small nuclear ribonucleoproteins SmD1 and SmD3. The chain is Protein arginine N-methyltransferase 7 (Art7) from Aedes aegypti (Yellowfever mosquito).